A 101-amino-acid chain; its full sequence is NADH-quinone oxidoreductase subunit K (101 aa).

3 consecutive transmembrane segments (helical) span residues 4 to 24, 30 to 50, and 65 to 85; these read LSHYLTVAAILFTLGVLGIFI, IVILMCVELILLAVNINLVAF, and FVLTVAAAEAAIGLAILVVFF.

The protein belongs to the complex I subunit 4L family. As to quaternary structure, NDH-1 is composed of 14 different subunits. Subunits NuoA, H, J, K, L, M, N constitute the membrane sector of the complex.

Its subcellular location is the cell inner membrane. It carries out the reaction a quinone + NADH + 5 H(+)(in) = a quinol + NAD(+) + 4 H(+)(out). NDH-1 shuttles electrons from NADH, via FMN and iron-sulfur (Fe-S) centers, to quinones in the respiratory chain. The immediate electron acceptor for the enzyme in this species is believed to be ubiquinone. Couples the redox reaction to proton translocation (for every two electrons transferred, four hydrogen ions are translocated across the cytoplasmic membrane), and thus conserves the redox energy in a proton gradient. This Methylobacterium sp. (strain 4-46) protein is NADH-quinone oxidoreductase subunit K.